The sequence spans 307 residues: tRNA dimethylallyltransferase (307 aa).

9–16 (GATGTGKS) contacts ATP. 11–16 (TGTGKS) is a binding site for substrate.

Belongs to the IPP transferase family. As to quaternary structure, monomer. Mg(2+) is required as a cofactor.

It catalyses the reaction adenosine(37) in tRNA + dimethylallyl diphosphate = N(6)-dimethylallyladenosine(37) in tRNA + diphosphate. Catalyzes the transfer of a dimethylallyl group onto the adenine at position 37 in tRNAs that read codons beginning with uridine, leading to the formation of N6-(dimethylallyl)adenosine (i(6)A). In Clavibacter sepedonicus (Clavibacter michiganensis subsp. sepedonicus), this protein is tRNA dimethylallyltransferase.